The chain runs to 76 residues: Sec-independent protein translocase protein TatA (76 aa).

A helical transmembrane segment spans residues 1–21 (MGSFSIWHWLVVLAIVVLVFG). The disordered stretch occupies residues 41–76 (EGMKGAEEESTPPPPAQQVTGHSIKSEIEEKDQTKV). The span at 64–76 (IKSEIEEKDQTKV) shows a compositional bias: basic and acidic residues.

Belongs to the TatA/E family. In terms of assembly, the Tat system comprises two distinct complexes: a TatABC complex, containing multiple copies of TatA, TatB and TatC subunits, and a separate TatA complex, containing only TatA subunits. Substrates initially bind to the TatABC complex, which probably triggers association of the separate TatA complex to form the active translocon.

It is found in the cell inner membrane. Part of the twin-arginine translocation (Tat) system that transports large folded proteins containing a characteristic twin-arginine motif in their signal peptide across membranes. TatA could form the protein-conducting channel of the Tat system. This chain is Sec-independent protein translocase protein TatA, found in Nitrosomonas europaea (strain ATCC 19718 / CIP 103999 / KCTC 2705 / NBRC 14298).